We begin with the raw amino-acid sequence, 441 residues long: tRNA-2-methylthio-N(6)-dimethylallyladenosine synthase (441 aa).

Residues 3 to 119 enclose the MTTase N-terminal domain; the sequence is KKVSIRTFGC…LPGLIRNAFQ (117 aa). Cys12, Cys48, Cys82, Cys155, Cys159, and Cys162 together coordinate [4Fe-4S] cluster. Residues 141 to 371 enclose the Radical SAM core domain; it reads RSGSISAFIP…IDLQSGISGE (231 aa). In terms of domain architecture, TRAM spans 374-437; sequence GNDVGSVQEV…QATLIGRCQD (64 aa).

It belongs to the methylthiotransferase family. MiaB subfamily. As to quaternary structure, monomer. Requires [4Fe-4S] cluster as cofactor.

It localises to the cytoplasm. The enzyme catalyses N(6)-dimethylallyladenosine(37) in tRNA + (sulfur carrier)-SH + AH2 + 2 S-adenosyl-L-methionine = 2-methylsulfanyl-N(6)-dimethylallyladenosine(37) in tRNA + (sulfur carrier)-H + 5'-deoxyadenosine + L-methionine + A + S-adenosyl-L-homocysteine + 2 H(+). In terms of biological role, catalyzes the methylthiolation of N6-(dimethylallyl)adenosine (i(6)A), leading to the formation of 2-methylthio-N6-(dimethylallyl)adenosine (ms(2)i(6)A) at position 37 in tRNAs that read codons beginning with uridine. In Prosthecochloris aestuarii (strain DSM 271 / SK 413), this protein is tRNA-2-methylthio-N(6)-dimethylallyladenosine synthase.